A 1523-amino-acid chain; its full sequence is TALPID3 protein (1523 aa).

A compositionally biased stretch (polar residues) spans 1–16 (MEAESGSSTSQDSLAS). Disordered stretches follow at residues 1 to 20 (MEAE…LTAG) and 57 to 84 (SRQA…ASNG). Coiled-coil stretches lie at residues 428–466 (IEKT…MNDL) and 499–528 (ILSD…LRAK). Residues 498 to 585 (SILSDAKRVL…MEQVKYDQKV (88 aa)) form a required for centrosomal localization region. 5 disordered regions span residues 1070–1112 (EPLV…LSGD), 1137–1262 (VITP…SEGE), 1294–1313 (ANEM…RSHK), 1373–1410 (DIDH…DADT), and 1498–1523 (SMNI…ADTF). A compositionally biased stretch (pro residues) spans 1073 to 1088 (VPTPLPTPQATPPQTP). Residues 1099-1108 (TPESSPSITE) are compositionally biased toward polar residues. Low complexity-rich tracts occupy residues 1137–1149 (VITP…EIIT) and 1236–1251 (SSEQ…PTET). Basic and acidic residues predominate over residues 1373–1386 (DIDHATARASEDRP). Residues 1507–1523 (SLSSIHGDSDSSGADTF) are compositionally biased toward low complexity.

Belongs to the TALPID3 family. As to expression, ubiquitously expressed.

Its subcellular location is the cytoplasm. The protein localises to the cytoskeleton. It localises to the microtubule organizing center. The protein resides in the centrosome. Functionally, required for ciliogenesis and sonic hedgehog/SHH signaling. Independently, involved in regulation of cell intracellular organization. Involved in regulation of cell polarity. This chain is TALPID3 protein (TALPID3), found in Gallus gallus (Chicken).